Reading from the N-terminus, the 123-residue chain is Ribosome-binding factor A (123 aa).

This sequence belongs to the RbfA family. Monomer. Binds 30S ribosomal subunits, but not 50S ribosomal subunits or 70S ribosomes.

It localises to the cytoplasm. Its function is as follows. One of several proteins that assist in the late maturation steps of the functional core of the 30S ribosomal subunit. Associates with free 30S ribosomal subunits (but not with 30S subunits that are part of 70S ribosomes or polysomes). Required for efficient processing of 16S rRNA. May interact with the 5'-terminal helix region of 16S rRNA. The protein is Ribosome-binding factor A of Geotalea daltonii (strain DSM 22248 / JCM 15807 / FRC-32) (Geobacter daltonii).